A 599-amino-acid chain; its full sequence is Calcium-dependent protein kinase 10 (599 aa).

Gly2 carries the N-myristoyl glycine lipid modification. The disordered stretch occupies residues 27–110 (RQDGDDALPG…PRPRVPPVKR (84 aa)). Residues 74-84 (VSTTDTASAEQ) are compositionally biased toward polar residues. Over residues 87–98 (SKSSAGSDSGEA) the composition is skewed to low complexity. Residues 133–391 (YSLGRKLGQG…AHEVLRHPWV (259 aa)) enclose the Protein kinase domain. Residues 139-147 (LGQGQFGTT) and Lys162 contribute to the ATP site. Asp257 acts as the Proton acceptor in catalysis. Residues 397–427 (APDKPLDSAVLSRMKQFSAMNKLKKMALRVI) are autoinhibitory domain. 4 EF-hand domains span residues 434-469 (DEIA…VGAN), 470-505 (LQES…MNKI), 506-541 (ERED…FGLG), and 544-575 (QLEE…PTMG). Ca(2+) contacts are provided by Asp447, Asp449, Ser451, Gln453, Glu458, Asp483, Asp485, Ser487, Thr489, Glu494, Asp519, Asp521, Ser523, Tyr525, Glu530, Asp553, Asp555, Asp557, Arg559, and Glu564.

The protein belongs to the protein kinase superfamily. Ser/Thr protein kinase family. CDPK subfamily. Expressed in roots.

It is found in the membrane. It catalyses the reaction L-seryl-[protein] + ATP = O-phospho-L-seryl-[protein] + ADP + H(+). The enzyme catalyses L-threonyl-[protein] + ATP = O-phospho-L-threonyl-[protein] + ADP + H(+). With respect to regulation, activated by calcium. Autophosphorylation may play an important role in the regulation of the kinase activity. Functionally, may play a role in signal transduction pathways that involve calcium as a second messenger. In Oryza sativa subsp. japonica (Rice), this protein is Calcium-dependent protein kinase 10.